Here is a 156-residue protein sequence, read N- to C-terminus: Endogenous retrovirus group K member 9 Pro protein (156 aa).

The Peptidase A2 domain maps to phenylalanine 21–leucine 96. Residue aspartate 26 is part of the active site. Residues tyrosine 111 to phenylalanine 156 form the G-patch domain.

Belongs to the peptidase A2 family. HERV class-II K(HML-2) subfamily. Active as a homodimer. Autoproteolytically processed at the N-terminus. Expected C-terminal autoprocessing not detected. The sequence shown is that of the processed Pro protein.

It carries out the reaction Processing at the authentic HIV-1 PR recognition site and release of the mature p17 matrix and the p24 capsid protein, as a result of the cleavage of the -SQNY-|-PIVQ- cleavage site.. In terms of biological role, retroviral proteases have roles in the processing of the primary translation products and the maturation of the viral particle. Endogenous Pro proteins may have kept, lost or modified their original function during evolution. This chain is Endogenous retrovirus group K member 9 Pro protein (ERVK-9), found in Homo sapiens (Human).